Reading from the N-terminus, the 228-residue chain is Lipoprotein LpqN (228 aa).

An N-terminal signal peptide occupies residues 1-19 (MKHFTAAVATVALSLALAG). A lipid anchor (N-palmitoyl cysteine) is attached at C20. Residue C20 is the site of S-diacylglycerol cysteine attachment. The tract at residues 26–53 (TDSAPTTSPTTTSPTTSTTTTSATTSAQ) is disordered. Over residues 28–52 (SAPTTSPTTTSPTTSTTTTSATTSA) the composition is skewed to low complexity.

In terms of assembly, interacts with the periplasmic loop domains of the mycolate transporters MmpL3 and MmpL11. Also interacts with secreted cell envelope biosynthetic enzymes such as Ag85A. These interactions are weak and may require a putative mycobacterial adapter protein or molecule. Interacts with human ubiquitin ligase CBL.

Its subcellular location is the cell membrane. It localises to the secreted. In terms of biological role, involved in cell envelope biogenesis. May act as a membrane fusion protein, connecting MmpL transporters with periplasmic proteins, and play a role in cell envelope lipid changes during biofilm maturation. Is also a virulence factor required for intracellular survival. Associates with CBL, a host ubiquitin ligase, and probably blocks the normal functions of CBL and disturbs CBL-mediated antibacterial activity. Interaction counteracts antibacterial defense but causes a reciprocal enhancement of antiviral defense. In Mycobacterium tuberculosis (strain ATCC 25618 / H37Rv), this protein is Lipoprotein LpqN.